A 2529-amino-acid chain; its full sequence is Zinc finger FYVE domain-containing protein 26 (2529 aa).

3 disordered regions span residues 584 to 650 (HLPE…PGPH), 689 to 709 (SSHR…SAAR), and 733 to 810 (VTSN…RFQT). Phosphoserine is present on residues S605 and S609. Over residues 689 to 701 (SSHRTPEETKLPE) the composition is skewed to basic and acidic residues. A compositionally biased stretch (basic residues) spans 755 to 765 (SSLRRGRRTRR). The span at 778–796 (SLEGTSSELSTSTSEGSLS) shows a compositional bias: low complexity. S791 is modified (phosphoserine). The span at 797–810 (AVSGQVESDSRFQT) shows a compositional bias: polar residues. Positions 859-884 (MFVERYQEVIQELARVEHKIENQNSD) form a coiled coil. The interval 1258–1286 (GLPLSTLGSPRPSENPSAERKSHSSPKDS) is disordered. Residues 1263 to 1273 (TLGSPRPSENP) are compositionally biased toward polar residues. Over residues 1274-1283 (SAERKSHSSP) the composition is skewed to basic and acidic residues. The stretch at 1488–1515 (VSDMAVQEELKSELQRKLMELRVYQKIL) forms a coiled coil. 4 positions are modified to phosphoserine: S1732, S1754, S1770, and S1772. A disordered region spans residues 1762 to 1799 (APGSALVRSPSPKERAFPQTQPPVEFVPPETPPARDQW). The segment at 1802-1862 (DETESVCMVC…VCDQCYSYYN (61 aa)) adopts an FYVE-type zinc-finger fold. Zn(2+) is bound by residues C1808, C1811, C1825, C1828, C1833, C1836, C1854, and C1857. Positions 1865-1884 (TPEESPCQSEVPDSAKNESP) are disordered.

The protein belongs to the ZFYVE26 family. In terms of assembly, interacts with AP5Z1, AP5B1, AP5S1 and SPG11. Interacts with TTC19 and KIF13A.

It localises to the cytoplasm. Its subcellular location is the cytoskeleton. The protein resides in the microtubule organizing center. The protein localises to the centrosome. It is found in the midbody. In terms of biological role, phosphatidylinositol 3-phosphate-binding protein required for the abscission step in cytokinesis: recruited to the midbody during cytokinesis and acts as a regulator of abscission. May also be required for efficient homologous recombination DNA double-strand break repair. In Mus musculus (Mouse), this protein is Zinc finger FYVE domain-containing protein 26 (Zfyve26).